The chain runs to 207 residues: Ribosomal RNA small subunit methyltransferase G (207 aa).

Residues Gly-73, Leu-78, 124–125, and Arg-139 each bind S-adenosyl-L-methionine; that span reads VE.

Belongs to the methyltransferase superfamily. RNA methyltransferase RsmG family.

The protein localises to the cytoplasm. It carries out the reaction guanosine(527) in 16S rRNA + S-adenosyl-L-methionine = N(7)-methylguanosine(527) in 16S rRNA + S-adenosyl-L-homocysteine. In terms of biological role, specifically methylates the N7 position of guanine in position 527 of 16S rRNA. This is Ribosomal RNA small subunit methyltransferase G from Shigella flexneri.